The primary structure comprises 685 residues: Putative alpha-1,3-mannosyltransferase MNN14 (685 aa).

At Met1 to Lys13 the chain is on the cytoplasmic side. A helical transmembrane segment spans residues Leu14–Ser34. Topologically, residues Gln35–Leu685 are lumenal. N-linked (GlcNAc...) asparagine glycans are attached at residues Asn199, Asn338, Asn408, and Asn556.

The protein belongs to the MNN1/MNT family.

The protein resides in the golgi apparatus membrane. Its pathway is protein modification; protein glycosylation. Its function is as follows. Responsible for addition of the terminal mannose residues to the outer chain of core N-linked polysaccharides and to O-linked mannotriose. Implicated in late Golgi modifications. Involved in virulence. The protein is Putative alpha-1,3-mannosyltransferase MNN14 (MNN14) of Candida albicans (strain SC5314 / ATCC MYA-2876) (Yeast).